A 60-amino-acid polypeptide reads, in one-letter code: Small ribosomal subunit protein eS31 (60 aa).

Positions 24, 27, 42, and 45 each coordinate Zn(2+). Residues 24–45 (CPRCGPGVFMADHGNRYACGRC) form a C4-type zinc finger.

It belongs to the eukaryotic ribosomal protein eS31 family. Part of the 30S ribosomal subunit. Zn(2+) serves as cofactor.

The polypeptide is Small ribosomal subunit protein eS31 (Methanopyrus kandleri (strain AV19 / DSM 6324 / JCM 9639 / NBRC 100938)).